Here is a 411-residue protein sequence, read N- to C-terminus: [Pyruvate dehydrogenase (acetyl-transferring)] kinase isozyme 4, mitochondrial (411 aa).

In terms of domain architecture, Histidine kinase spans 138 to 368; sequence IIEYKDACTV…DAIIYLKALS (231 aa). ATP is bound by residues 254–261, Asp-293, 312–313, and 329–334; these read ELFKNAMR, ST, and GFGYGL.

It belongs to the PDK/BCKDK protein kinase family. In terms of assembly, homodimer. Interacts with the pyruvate dehydrogenase complex subunit DLAT, and is part of the multimeric pyruvate dehydrogenase complex that contains multiple copies of pyruvate dehydrogenase (E1), dihydrolipoamide acetyltransferase (DLAT, E2) and lipoamide dehydrogenase (DLD, E3). As to expression, ubiquitous; highest levels of expression in heart and skeletal muscle.

The protein resides in the mitochondrion matrix. It carries out the reaction L-seryl-[pyruvate dehydrogenase E1 alpha subunit] + ATP = O-phospho-L-seryl-[pyruvate dehydrogenase E1 alpha subunit] + ADP + H(+). Its function is as follows. Kinase that plays a key role in regulation of glucose and fatty acid metabolism and homeostasis via phosphorylation of the pyruvate dehydrogenase subunits PDHA1 and PDHA2. This inhibits pyruvate dehydrogenase activity, and thereby regulates metabolite flux through the tricarboxylic acid cycle, down-regulates aerobic respiration and inhibits the formation of acetyl-coenzyme A from pyruvate. Inhibition of pyruvate dehydrogenase decreases glucose utilization and increases fat metabolism in response to prolonged fasting and starvation. Plays an important role in maintaining normal blood glucose levels under starvation, and is involved in the insulin signaling cascade. Via its regulation of pyruvate dehydrogenase activity, plays an important role in maintaining normal blood pH and in preventing the accumulation of ketone bodies under starvation. In the fed state, mediates cellular responses to glucose levels and to a high-fat diet. Regulates both fatty acid oxidation and de novo fatty acid biosynthesis. Plays a role in the generation of reactive oxygen species. Protects detached epithelial cells against anoikis. Plays a role in cell proliferation via its role in regulating carbohydrate and fatty acid metabolism. This is [Pyruvate dehydrogenase (acetyl-transferring)] kinase isozyme 4, mitochondrial (PDK4) from Homo sapiens (Human).